The primary structure comprises 387 residues: Type 2 DNA topoisomerase 6 subunit A (387 aa).

A Topo IIA-type catalytic domain is found at 12–160; sequence EARKKAADTL…MLILSKEKGK (149 aa). Y106 acts as the O-(5'-phospho-DNA)-tyrosine intermediate in catalysis. E207 and D259 together coordinate Mg(2+).

It belongs to the TOP6A family. Homodimer. Heterotetramer of two Top6A and two Top6B chains. The cofactor is Mg(2+).

It catalyses the reaction ATP-dependent breakage, passage and rejoining of double-stranded DNA.. In terms of biological role, relaxes both positive and negative superturns and exhibits a strong decatenase activity. The protein is Type 2 DNA topoisomerase 6 subunit A of Sulfurisphaera tokodaii (strain DSM 16993 / JCM 10545 / NBRC 100140 / 7) (Sulfolobus tokodaii).